We begin with the raw amino-acid sequence, 329 residues long: Peroxidase 18 (329 aa).

An N-terminal signal peptide occupies residues 1–29; it reads MALQFFSCKPKYTFLSSLLLLLLLSSSVA. Intrachain disulfides connect Cys-40–Cys-116, Cys-73–Cys-78, Cys-122–Cys-325, and Cys-201–Cys-235. His-71 (proton acceptor) is an active-site residue. Positions 72, 75, 77, 79, and 81 each coordinate Ca(2+). Residue Asn-87 is glycosylated (N-linked (GlcNAc...) asparagine). Ile-164 lines the substrate pocket. A heme b-binding site is contributed by His-194. Thr-195 is a binding site for Ca(2+). Residues Asp-249, Thr-252, and Asp-257 each contribute to the Ca(2+) site.

Belongs to the peroxidase family. Classical plant (class III) peroxidase subfamily. Heme b serves as cofactor. Requires Ca(2+) as cofactor.

Its subcellular location is the secreted. The enzyme catalyses 2 a phenolic donor + H2O2 = 2 a phenolic radical donor + 2 H2O. In terms of biological role, removal of H(2)O(2), oxidation of toxic reductants, biosynthesis and degradation of lignin, suberization, auxin catabolism, response to environmental stresses such as wounding, pathogen attack and oxidative stress. These functions might be dependent on each isozyme/isoform in each plant tissue. In Arabidopsis thaliana (Mouse-ear cress), this protein is Peroxidase 18 (PER18).